Consider the following 198-residue polypeptide: MSNLNNLTSKILNDAEEKKKYILADAEAQKDKIISKKTNRAEADKEEIITKANIEAEVKKARIISNAKLSVRNDMLRAKQDVISKVFNEAIEKLQNLSNGDYKYYVISTLDSLELEGTEVIIINEKDKDIFSNEFLEALNKELESKGKKGSITLNMEGKFNGGFILDRNGIQINNTFEALINSLRGELEFEVNKVLFD.

It belongs to the V-ATPase E subunit family.

Its function is as follows. Produces ATP from ADP in the presence of a proton gradient across the membrane. In Clostridium perfringens (strain ATCC 13124 / DSM 756 / JCM 1290 / NCIMB 6125 / NCTC 8237 / Type A), this protein is V-type ATP synthase subunit E.